Consider the following 1026-residue polypeptide: Leucine-rich repeat and coiled-coil domain-containing protein 1 (1026 aa).

LRR repeat units follow at residues 39 to 60, 61 to 82, 83 to 104, 105 to 126, and 131 to 152; these read SIHAINLHCNNISKISSIDHIW, NLRHLDLSSNQISQIEGLNTLT, KLCTLNLSCNLITRVEGLEALV, NLTKLNLSYNHINDLSGLMPLH, and KLRYIDLHSNYIDSIHHLLQCT. Positions 170–212 constitute an LRRCT domain; it reads NPICLIPGYRAIILQTLPQLRILDCKNIFGEPVSLEEINSSHL. Positions 310 to 338 are disordered; it reads DNVPEKDLRPKRDTDITSESDYGNRRECS. Residues 312–324 show a composition bias toward basic and acidic residues; sequence VPEKDLRPKRDTD. A coiled-coil region spans residues 428 to 641; it reads REMRWKAEQT…DLENEFRIAL (214 aa).

Belongs to the LRRCC1 family.

The protein localises to the cytoplasm. It localises to the cytoskeleton. The protein resides in the microtubule organizing center. Its subcellular location is the centrosome. It is found in the centriole. Its function is as follows. Required for the organization of the mitotic spindle. Maintains the structural integrity of centrosomes during mitosis. This is Leucine-rich repeat and coiled-coil domain-containing protein 1 (Lrrcc1) from Mus musculus (Mouse).